We begin with the raw amino-acid sequence, 478 residues long: Putative malate transporter YflS (478 aa).

Transmembrane regions (helical) follow at residues 12 to 31 (AVKL…IWFI), 41 to 57 (AWHL…GFIS), 64 to 81 (AIAI…TLSI), 96 to 118 (IVIA…ISYV), 187 to 209 (GFQG…PLIA), 222 to 244 (WTSW…PLVI), 277 to 296 (LSMV…GGSF), 300 to 319 (ATTT…VLTW), 332 to 354 (LTWF…VSWF), 364 to 386 (GFSW…YFFA), 398 to 420 (AFLA…LAFI), and 450 to 472 (WSIG…GLWW).

The protein belongs to the SLC13A/DASS transporter (TC 2.A.47) family. DIT1 subfamily.

It localises to the cell membrane. In terms of biological role, might be a malate transporter. This chain is Putative malate transporter YflS (yflS), found in Bacillus subtilis (strain 168).